A 172-amino-acid polypeptide reads, in one-letter code: C-phycocyanin beta chain (172 aa).

Asparagine 72 carries the post-translational modification N4-methylasparagine. Positions 82 and 153 each coordinate (2R,3E)-phycocyanobilin.

The protein belongs to the phycobiliprotein family. As to quaternary structure, heterodimer of an alpha and a beta subunit, which further assembles into trimers and the trimers into hexamers. The basic functional unit of phycobiliproteins is a ring-shaped hexamer formed from two back-to-back trimers contacting via the alpha chain subunits. The trimers are composed of alpha/beta subunit heterodimers arranged around a three-fold axis of symmetry. The phycoerythrins also contain a gamma subunit which is located in the center of the hexamer. Contains two covalently linked bilin chromophores.

It localises to the plastid. The protein resides in the chloroplast thylakoid membrane. Its function is as follows. Light-harvesting photosynthetic bile pigment-protein from the phycobiliprotein complex (phycobilisome, PBS). Phycocyanin is the major phycobiliprotein in the PBS rod. This is C-phycocyanin beta chain (cpcB) from Aglaothamnion neglectum (Red alga).